We begin with the raw amino-acid sequence, 229 residues long: Wtf element wtf14 (229 aa).

The segment covering 1–26 (MENNHHLAKDSLDELNPKRGKGEHET) has biased composition (basic and acidic residues). The tract at residues 1–27 (MENNHHLAKDSLDELNPKRGKGEHETQ) is disordered. Helical transmembrane passes span 71–91 (IPAVLLPVFVINIALFKYLVF), 100–120 (VLFGLGNGGINIFSMWLLLAT), 151–171 (LYAILKLTFVNAFAIPLLMFF), and 188–208 (VIGVMLNVAYFIIEIENPGLF).

It belongs to the WTF family.

The protein localises to the endoplasmic reticulum membrane. Functionally, may act in meiotic drive. The protein is Wtf element wtf14 of Schizosaccharomyces kambucha (Fission yeast).